The chain runs to 147 residues: uncharacterized protein (147 aa).

The helical transmembrane segment at 69 to 89 (IFFFLSLYLSSIKIPMLILNI) threads the bilayer.

The protein localises to the membrane. This is an uncharacterized protein from Saccharomyces cerevisiae (strain ATCC 204508 / S288c) (Baker's yeast).